The primary structure comprises 333 residues: Phenylalanine--tRNA ligase alpha subunit (333 aa).

Glu-254 is a Mg(2+) binding site.

It belongs to the class-II aminoacyl-tRNA synthetase family. Phe-tRNA synthetase alpha subunit type 1 subfamily. In terms of assembly, tetramer of two alpha and two beta subunits. Requires Mg(2+) as cofactor.

The protein resides in the cytoplasm. The catalysed reaction is tRNA(Phe) + L-phenylalanine + ATP = L-phenylalanyl-tRNA(Phe) + AMP + diphosphate + H(+). The protein is Phenylalanine--tRNA ligase alpha subunit (pheS) of Xylella fastidiosa (strain 9a5c).